Reading from the N-terminus, the 1109-residue chain is Carbamoyl phosphate synthase large chain (1109 aa).

The segment at methionine 1 to aspartate 402 is carboxyphosphate synthetic domain. ATP-binding residues include arginine 129, arginine 169, glycine 175, glycine 176, glutamate 208, isoleucine 210, glutamate 215, glycine 241, valine 242, histidine 243, glutamine 285, and glutamate 299. Residues lysine 133–valine 328 form the ATP-grasp 1 domain. Residues glutamine 285, glutamate 299, and asparagine 301 each coordinate Mg(2+). Mn(2+)-binding residues include glutamine 285, glutamate 299, and asparagine 301. Positions lysine 403–threonine 548 are oligomerization domain. A carbamoyl phosphate synthetic domain region spans residues glutamate 549–tyrosine 956. The ATP-grasp 2 domain maps to glycine 678–alanine 876. Residues arginine 714, arginine 760, leucine 762, glutamate 767, glycine 792, isoleucine 793, histidine 794, serine 795, glutamine 835, and glutamate 847 each coordinate ATP. Glutamine 835, glutamate 847, and asparagine 849 together coordinate Mg(2+). The Mn(2+) site is built by glutamine 835, glutamate 847, and asparagine 849. The MGS-like domain maps to glycine 957–arginine 1102. The interval glycine 957–alanine 1109 is allosteric domain.

Belongs to the CarB family. As to quaternary structure, composed of two chains; the small (or glutamine) chain promotes the hydrolysis of glutamine to ammonia, which is used by the large (or ammonia) chain to synthesize carbamoyl phosphate. Tetramer of heterodimers (alpha,beta)4. Mg(2+) serves as cofactor. Mn(2+) is required as a cofactor.

The catalysed reaction is hydrogencarbonate + L-glutamine + 2 ATP + H2O = carbamoyl phosphate + L-glutamate + 2 ADP + phosphate + 2 H(+). It catalyses the reaction hydrogencarbonate + NH4(+) + 2 ATP = carbamoyl phosphate + 2 ADP + phosphate + 2 H(+). The protein operates within amino-acid biosynthesis; L-arginine biosynthesis; carbamoyl phosphate from bicarbonate: step 1/1. Its pathway is pyrimidine metabolism; UMP biosynthesis via de novo pathway; (S)-dihydroorotate from bicarbonate: step 1/3. Functionally, large subunit of the glutamine-dependent carbamoyl phosphate synthetase (CPSase). CPSase catalyzes the formation of carbamoyl phosphate from the ammonia moiety of glutamine, carbonate, and phosphate donated by ATP, constituting the first step of 2 biosynthetic pathways, one leading to arginine and/or urea and the other to pyrimidine nucleotides. The large subunit (synthetase) binds the substrates ammonia (free or transferred from glutamine from the small subunit), hydrogencarbonate and ATP and carries out an ATP-coupled ligase reaction, activating hydrogencarbonate by forming carboxy phosphate which reacts with ammonia to form carbamoyl phosphate. The protein is Carbamoyl phosphate synthase large chain of Beutenbergia cavernae (strain ATCC BAA-8 / DSM 12333 / CCUG 43141 / JCM 11478 / NBRC 16432 / NCIMB 13614 / HKI 0122).